Here is a 145-residue protein sequence, read N- to C-terminus: Transcriptional regulator MraZ (145 aa).

2 SpoVT-AbrB domains span residues 5–50 (TFNH…ALPQ) and 81–124 (AHEV…DRAA).

Belongs to the MraZ family. Forms oligomers.

Its subcellular location is the cytoplasm. It is found in the nucleoid. The protein is Transcriptional regulator MraZ of Anaeromyxobacter dehalogenans (strain 2CP-1 / ATCC BAA-258).